An 86-amino-acid chain; its full sequence is Exodeoxyribonuclease 7 small subunit (86 aa).

The disordered stretch occupies residues 64 to 86 (SNPETVQDKTDTDEPDSNEFSLT).

The protein belongs to the XseB family. As to quaternary structure, heterooligomer composed of large and small subunits.

The protein localises to the cytoplasm. It carries out the reaction Exonucleolytic cleavage in either 5'- to 3'- or 3'- to 5'-direction to yield nucleoside 5'-phosphates.. Bidirectionally degrades single-stranded DNA into large acid-insoluble oligonucleotides, which are then degraded further into small acid-soluble oligonucleotides. This chain is Exodeoxyribonuclease 7 small subunit, found in Akkermansia muciniphila (strain ATCC BAA-835 / DSM 22959 / JCM 33894 / BCRC 81048 / CCUG 64013 / CIP 107961 / Muc).